A 177-amino-acid chain; its full sequence is uncharacterized protein (177 aa).

4 consecutive transmembrane segments (helical) span residues isoleucine 4–leucine 24, isoleucine 33–isoleucine 53, isoleucine 80–leucine 100, and methionine 115–valine 135.

The protein resides in the cell membrane. This is an uncharacterized protein from Bacillus subtilis (strain 168).